The sequence spans 201 residues: MQTSPLLTQLMEALRCLPGVGPKSAQRMAFTLLQRDRSGGMRLAQALTRAMSEIGHCADCRTFTEQEVCNICSNPRRQENGQICVVESPADIYAIEQTGQFSGRYFVLMGHLSPLDGIGPDDIGLDRLEQRLAEEKITEVILATNPTVEGEATANYIAELCAQYGVEASRIAHGVPVGGELEMVDGTTLSHSLAGRHKIRF.

The C4-type zinc-finger motif lies at 57-72 (CADCRTFTEQEVCNIC). One can recognise a Toprim domain in the interval 81-176 (GQICVVESPA…EASRIAHGVP (96 aa)).

It belongs to the RecR family.

Its function is as follows. May play a role in DNA repair. It seems to be involved in an RecBC-independent recombinational process of DNA repair. It may act with RecF and RecO. This Escherichia coli O17:K52:H18 (strain UMN026 / ExPEC) protein is Recombination protein RecR.